Consider the following 90-residue polypeptide: Probable Fe(2+)-trafficking protein (90 aa).

The protein belongs to the Fe(2+)-trafficking protein family.

In terms of biological role, could be a mediator in iron transactions between iron acquisition and iron-requiring processes, such as synthesis and/or repair of Fe-S clusters in biosynthetic enzymes. In Saccharophagus degradans (strain 2-40 / ATCC 43961 / DSM 17024), this protein is Probable Fe(2+)-trafficking protein.